The chain runs to 124 residues: Fluoride-specific ion channel FluC (124 aa).

The next 4 membrane-spanning stretches (helical) occupy residues 4–24, 35–55, 60–80, and 102–122; these read LLLV…ISIF, FGTL…YALG, ISPE…TTFS, and VVLN…LVFS. Na(+)-binding residues include Gly-74 and Thr-77.

The protein belongs to the fluoride channel Fluc/FEX (TC 1.A.43) family.

The protein localises to the cell inner membrane. The catalysed reaction is fluoride(in) = fluoride(out). Na(+) is not transported, but it plays an essential structural role and its presence is essential for fluoride channel function. In terms of biological role, fluoride-specific ion channel. Important for reducing fluoride concentration in the cell, thus reducing its toxicity. This Shewanella sp. (strain ANA-3) protein is Fluoride-specific ion channel FluC.